A 252-amino-acid chain; its full sequence is Flagellar brake protein YcgR (252 aa).

One can recognise a PilZ domain in the interval 123 to 238; the sequence is QRREFYRVPT…TLATVQKYIT (116 aa).

It belongs to the YcgR family. In terms of assembly, monomer. Interacts with the flagellar basal bodies.

The protein localises to the bacterial flagellum basal body. Acts as a flagellar brake, regulating swimming and swarming in a bis-(3'-5') cyclic diguanylic acid (c-di-GMP)-dependent manner. Binds 1 c-di-GMP dimer per subunit. Increasing levels of c-di-GMP lead to decreased motility. This is Flagellar brake protein YcgR from Janthinobacterium sp. (strain Marseille) (Minibacterium massiliensis).